The chain runs to 303 residues: Deoxyhypusine hydroxylase (303 aa).

Met-1 carries the post-translational modification N-acetylmethionine. HEAT-like PBS-type repeat units lie at residues 23 to 49, 54 to 80, 87 to 113, 175 to 201, 206 to 232, and 239 to 265; these read ARFR…AFDD, LKHE…VLRD, VRHE…YSTD, DRYR…GLRC, FRHE…ALAQ, and VRHE…HVAD. Positions 56, 89, and 90 each coordinate Fe cation. His-208, His-241, and Glu-242 together coordinate Fe cation.

This sequence belongs to the deoxyhypusine hydroxylase family. The cofactor is Fe(2+).

It carries out the reaction [eIF5A protein]-deoxyhypusine + AH2 + O2 = [eIF5A protein]-hypusine + A + H2O. The protein operates within protein modification; eIF5A hypusination. Its function is as follows. Catalyzes the hydroxylation of the N(6)-(4-aminobutyl)-L-lysine intermediate produced by deoxyhypusine synthase/DHPS on a critical lysine of the eukaryotic translation initiation factor 5A/eIF-5A. This is the second step of the post-translational modification of that lysine into an unusual amino acid residue named hypusine. Hypusination is unique to mature eIF-5A factor and is essential for its function. In Bos taurus (Bovine), this protein is Deoxyhypusine hydroxylase.